The following is a 101-amino-acid chain: MLVRENNSNDRSIIEYVIKILLISGISRIIILILAMFESIRHIIFHNDTNPSDARKFQMAICRLSSQKSRKLKNPIESSTTSHKKKGYVRKCYECLQIQVS.

The chain crosses the membrane as a helical span at residues 17–37; the sequence is VIKILLISGISRIIILILAMF.

Its subcellular location is the endoplasmic reticulum membrane. This is an uncharacterized protein from Schizosaccharomyces pombe (strain 972 / ATCC 24843) (Fission yeast).